The following is a 456-amino-acid chain: Exodeoxyribonuclease 7 large subunit (456 aa).

It belongs to the XseA family. As to quaternary structure, heterooligomer composed of large and small subunits.

The protein resides in the cytoplasm. The catalysed reaction is Exonucleolytic cleavage in either 5'- to 3'- or 3'- to 5'-direction to yield nucleoside 5'-phosphates.. Its function is as follows. Bidirectionally degrades single-stranded DNA into large acid-insoluble oligonucleotides, which are then degraded further into small acid-soluble oligonucleotides. The polypeptide is Exodeoxyribonuclease 7 large subunit (Shigella dysenteriae serotype 1 (strain Sd197)).